The chain runs to 379 residues: Alcohol dehydrogenase 2 (379 aa).

Position 48 (C48) interacts with Zn(2+). An NAD(+)-binding site is contributed by 49–53 (HTDML). Zn(2+) contacts are provided by H69, C100, C103, C106, C114, and C178. NAD(+) is bound by residues 203–208 (GLGAVG), D227, K232, 275–277 (TGI), 298–300 (IGA), and 321–323 (TTF).

Belongs to the zinc-containing alcohol dehydrogenase family. Class-IV subfamily. Homodimer. The cofactor is Zn(2+). As to expression, expressed in flowers and disk florets.

It catalyses the reaction (R,R)-chrysanthemol + NAD(+) = (1R,3R)-chrysanthemal + NADH + H(+). The enzyme catalyses nerol + NAD(+) = neral + NADH + H(+). It carries out the reaction (S)-(-)-citronellol + NAD(+) = (S)-(-)-citronellal + NADH + H(+). The catalysed reaction is perillyl alcohol + NAD(+) = perillyl aldehyde + NADH + H(+). It catalyses the reaction (6E)-8-hydroxygeraniol + NAD(+) = (6E)-8-hydroxygeranial + NADH + H(+). The enzyme catalyses (2E)-geraniol + NAD(+) = (2E)-geranial + NADH + H(+). It functions in the pathway isoprenoid biosynthesis. Functionally, component of the monoterpenoid pyrethrins biosynthesis; pyrethrins are widely used plant-derived pesticide. Mediates the conversion of trans-chrysanthemol into trans-chrysanthemal. The protein is Alcohol dehydrogenase 2 of Tanacetum cinerariifolium (Dalmatian daisy).